The chain runs to 428 residues: Immunoglobulin superfamily member 11 (428 aa).

Residues 1–22 (MTRRRSALASWLLLSLLGVAAS) form the signal peptide. An Ig-like V-type domain is found at 23–136 (LEVSESPGSV…DRGGRNIGVT (114 aa)). The Extracellular segment spans residues 23-239 (LEVSESPGSV…LQVISPQPRS (217 aa)). 2 cysteine pairs are disulfide-bonded: cysteine 44–cysteine 120 and cysteine 165–cysteine 215. An N-linked (GlcNAc...) asparagine glycan is attached at asparagine 102. The Ig-like C2-type domain maps to 144 to 234 (PSAPNCQIQG…TCLLDLQVIS (91 aa)). Residues 240 to 260 (VGVIAGAVGTGAVLIVICLAL) traverse the membrane as a helical segment. Over 261–428 (TSGAFFYWRS…PAQSRAGSLV (168 aa)) the chain is Cytoplasmic. Residue arginine 375 is modified to Omega-N-methylarginine.

Post-translationally, N-glycosylated.

The protein localises to the cell membrane. Functionally, functions as a cell adhesion molecule through homophilic interaction. Stimulates cell growth. In Rattus norvegicus (Rat), this protein is Immunoglobulin superfamily member 11 (Igsf11).